The sequence spans 273 residues: NLP effector protein 10 (273 aa).

The first 21 residues, 1 to 21 (MKLPTFLIGFVALLVTSNGSA), serve as a signal peptide directing secretion. N91 is a glycosylation site (N-linked (GlcNAc...) asparagine). The Conserved undecapeptide motif motif lies at 129–139 (AIMYAWYLPRA). A Conserved heptapeptide motif motif is present at residues 149-155 (GHRHYWL).

It belongs to the Necrosis inducing protein (NPP1) family.

It is found in the secreted. Its function is as follows. Secreted effector that acts as a pathogen-associated molecular pattern (PAMP) recognized by the plant immune system. Seems not to induce necrosis in Nicotiana benthamiana leaves but significantly improves disease resistance of Arabidopsis thaliana to Hyaloperonospora arabidopsidis and causes an inhibition of plant growth which is typically associated with enhanced immunity when over-expressed in Arabidopsis. The sequence is that of NLP effector protein 10 from Plasmopara viticola (Downy mildew of grapevine).